The chain runs to 84 residues: Turripeptide IX-03 (84 aa).

The signal sequence occupies residues 1–21 (MGFYMLLTVALLLTSLMNVEA). A propeptide spanning residues 22–39 (TPVDQAERSALEKSGLGN) is cleaved from the precursor. 3 disulfide bridges follow: cysteine 48/cysteine 70, cysteine 55/cysteine 74, and cysteine 60/cysteine 81.

Expressed by the venom duct.

It is found in the secreted. This chain is Turripeptide IX-03, found in Gemmula speciosa (Splendid gem-turris).